The sequence spans 405 residues: GTPase Obg (405 aa).

Residues 1–159 enclose the Obg domain; sequence MKFVDEVSIF…RDLKLELKVL (159 aa). The tract at residues 127–148 is disordered; sequence NTRFKSSTNRAPRQTTPGKPGD. Residues 129-143 are compositionally biased toward polar residues; it reads RFKSSTNRAPRQTTP. The 174-residue stretch at 160-333 folds into the OBG-type G domain; the sequence is ADVGLLGLPN…LSQAIMRYLD (174 aa). Residues 166-173, 191-195, 213-216, 283-286, and 314-316 contribute to the GTP site; these read GLPNAGKS, FTTLV, DIPG, NKAD, and SAL. Positions 173 and 193 each coordinate Mg(2+). Residues 373–405 form a disordered region; sequence LRRAGVKSVEEADDDDFDDDDDDEGGAEIIYVR. Residues 383 to 398 show a composition bias toward acidic residues; that stretch reads EADDDDFDDDDDDEGG.

This sequence belongs to the TRAFAC class OBG-HflX-like GTPase superfamily. OBG GTPase family. Monomer. Mg(2+) serves as cofactor.

It localises to the cytoplasm. Its function is as follows. An essential GTPase which binds GTP, GDP and possibly (p)ppGpp with moderate affinity, with high nucleotide exchange rates and a fairly low GTP hydrolysis rate. Plays a role in control of the cell cycle, stress response, ribosome biogenesis and in those bacteria that undergo differentiation, in morphogenesis control. In Stutzerimonas stutzeri (strain A1501) (Pseudomonas stutzeri), this protein is GTPase Obg.